The chain runs to 225 residues: Leucyl/phenylalanyl-tRNA--protein transferase (225 aa).

The protein belongs to the L/F-transferase family.

It is found in the cytoplasm. The enzyme catalyses N-terminal L-lysyl-[protein] + L-leucyl-tRNA(Leu) = N-terminal L-leucyl-L-lysyl-[protein] + tRNA(Leu) + H(+). It catalyses the reaction N-terminal L-arginyl-[protein] + L-leucyl-tRNA(Leu) = N-terminal L-leucyl-L-arginyl-[protein] + tRNA(Leu) + H(+). The catalysed reaction is L-phenylalanyl-tRNA(Phe) + an N-terminal L-alpha-aminoacyl-[protein] = an N-terminal L-phenylalanyl-L-alpha-aminoacyl-[protein] + tRNA(Phe). Functionally, functions in the N-end rule pathway of protein degradation where it conjugates Leu, Phe and, less efficiently, Met from aminoacyl-tRNAs to the N-termini of proteins containing an N-terminal arginine or lysine. The protein is Leucyl/phenylalanyl-tRNA--protein transferase of Gluconobacter oxydans (strain 621H) (Gluconobacter suboxydans).